The sequence spans 165 residues: UPF0303 protein Rleg2_2653 (165 aa).

It belongs to the UPF0303 family.

In Rhizobium leguminosarum bv. trifolii (strain WSM2304), this protein is UPF0303 protein Rleg2_2653.